The primary structure comprises 277 residues: Undecaprenyl-diphosphatase (277 aa).

The next 7 helical transmembrane spans lie at 3-23 (YIIE…TEIF), 48-68 (LTLF…IYYF), 97-117 (ISYA…GLLI), 125-145 (LLSI…VFLL), 198-218 (SFLC…YDAI), 227-247 (IPGF…TIKI), and 257-277 (LIWF…LYII).

Belongs to the UppP family.

The protein localises to the cell membrane. The catalysed reaction is di-trans,octa-cis-undecaprenyl diphosphate + H2O = di-trans,octa-cis-undecaprenyl phosphate + phosphate + H(+). In terms of biological role, catalyzes the dephosphorylation of undecaprenyl diphosphate (UPP). Confers resistance to bacitracin. This is Undecaprenyl-diphosphatase from Acholeplasma laidlawii (strain PG-8A).